We begin with the raw amino-acid sequence, 112 residues long: Secretoglobin family 2B member 20 (112 aa).

A signal peptide spans 1-23 (MKGTLLLLGLLVTGELSFQTTEA). The N-linked (GlcNAc...) asparagine glycan is linked to Asn50.

This sequence belongs to the secretoglobin family. As to expression, expressed in lacrimal gland, at higher level in males than females. Expressed in the submandibular gland.

Its subcellular location is the secreted. This Mus musculus (Mouse) protein is Secretoglobin family 2B member 20 (Scgb2b20).